The primary structure comprises 359 residues: MPSSSGVDSTQELLDAQAHIWNHIFNHINSMTLKWAVQLGIPDIIHKHDKPMTLSQLADAIPINRAKSDALHRIMRILVHSKFFDRVRTLPNEEEAYCLTRASRLLLRDEPLSLTPFALAVLDEDLMGTFHCVPEWFGNECPSPLEFKHEKSIREFAENNQRWSLLFNEGMANDARLVGSILAKESRKVFEGLETMVDVGGGTGMVSKAIVDAFPGMKGIVLDLPYVVSGLKGSGNLRYVGGDMFHSVPPADAVFLKWILHNWSDDECIKILEKCKEAITTSKNMKGGKVIIVDMILGYEKQQDEAVETQLFFDMMMMTTLTGKERTEQEWAKIFFAAGFKTYKIYPLLGLRSLIEVFP.

D223 serves as a coordination point for S-adenosyl-L-methionine. The Proton acceptor role is filled by H261.

It belongs to the class I-like SAM-binding methyltransferase superfamily. Cation-independent O-methyltransferase family. As to expression, expressed in leaves and trichomes, especially in cv. SD and cv. EMX-1, but barely in cv. MC and cv. SW.

The catalysed reaction is an 8-hydroxyflavone + S-adenosyl-L-methionine = an 8-methoxyflavone + S-adenosyl-L-homocysteine + H(+). It carries out the reaction 4',7,8-trihydroxyflavone + S-adenosyl-L-methionine = 4',7-dihydroxy-8-methoxyflavone + S-adenosyl-L-homocysteine + H(+). It catalyses the reaction 7,8-dihydroxyflavone + S-adenosyl-L-methionine = 7-hydroxy-8-methoxyflavone + S-adenosyl-L-homocysteine + H(+). The enzyme catalyses 3',4',7,8-tetrahydroxyflavone + S-adenosyl-L-methionine = 3',4,7-trihydroxy-8-methoxyflavone + S-adenosyl-L-homocysteine + H(+). It functions in the pathway flavonoid metabolism. With respect to regulation, strongly inhibited by gardenin B (GARD B). Cation-independent flavonoid 8-O-methyltransferase involved in the biosynthesis of polymethoxylated flavonoids natural products such as nevadensin and salvigenin, aroma compounds which contribute to the flavor of sweet basil, and exhibit pharmacological activities such as anti-allergic, anti-oxidant, antibacterial, anti-proliferative, and anti-inflammatory effects. Catalyzes S-adenosylmethionine-dependent regioselective 8-O-methylation of flavonoids; mediates likely the conversion of pilosin (PIL) to nevadensin (NEV) and of 8-hydroxysalvigenin (8-OH-SALV) to gardenin B (GARD B). Can also use 3',4',7,8-tetrahydroxyflavone as substrate. Accepts other unnatural O-diphenols including 7,8,4'-trihydroxy-flavone and 7-O-methyl-8-hydroxy-flavone, and, with a lower efficiency, 7,8-dihydroxy-flavone, as substrates. The sequence is that of Flavonoid 8-O-methyltransferase 1 from Ocimum basilicum (Sweet basil).